A 352-amino-acid polypeptide reads, in one-letter code: PDZ and LIM domain protein 2 (352 aa).

The PDZ domain occupies 1-84 (MALTVDVAGP…PLRLQLDRSQ (84 aa)). Disordered regions lie at residues 69–95 (IRQS…NGDS) and 108–141 (VRTH…PPPF). The segment covering 81–95 (DRSQAASPGQTNGDS) has biased composition (polar residues). Over residues 117–135 (SLRSSYSSPTSLSPRAGSP) the composition is skewed to low complexity. A Phosphoserine modification is found at Ser-124. Residue Thr-126 is modified to Phosphothreonine. A phosphoserine mark is found at Ser-127, Ser-129, Ser-134, Ser-137, Ser-143, Ser-161, Ser-197, Ser-203, Ser-213, and Ser-266. Disordered stretches follow at residues 170–214 (LSYS…GGSL) and 253–275 (ERGG…PASR). A compositionally biased stretch (low complexity) spans 258 to 275 (PAFLPSSLSPQSSLPASR). The 61-residue stretch at 284-344 (HTCEKCSTSI…EKHARQRYSA (61 aa)) folds into the LIM zinc-binding domain.

As to quaternary structure, interacts with alpha-actinins ACTN1 and ACTN4, FLNA and MYH9. Interacts (via LIM zinc-binding domain) with MKRN2.

It localises to the cytoplasm. The protein localises to the cytoskeleton. Probable adapter protein located at the actin cytoskeleton that promotes cell attachment. Necessary for the migratory capacity of epithelial cells. Overexpression enhances cell adhesion to collagen and fibronectin and suppresses anchorage independent growth. May contribute to tumor cell migratory capacity. The sequence is that of PDZ and LIM domain protein 2 (PDLIM2) from Macaca fascicularis (Crab-eating macaque).